A 349-amino-acid polypeptide reads, in one-letter code: Ethyl acetate hydrolase (349 aa).

The region spanning 67–300 is the AB hydrolase-1 domain; it reads YIGEGRALDP…SHDQFFTVDD (234 aa). S139 acts as the Nucleophile in catalysis. Residues D293 and H322 contribute to the active site.

It belongs to the AB hydrolase superfamily. Acetyl esterase family. In terms of assembly, homodimer.

The enzyme catalyses ethyl acetate + H2O = ethanol + acetate + H(+). Esterase that catalyzes the hydrolysis of ethyl acetate. Involved in the degradation of short chain methyl ketones (MEK) such as 2-butanone and 2-hexanone. In vitro, can also hydrolyze vinyl acetate, 4-nitrophenyl acetate, methyl acetate, propyl acetate, benzyl acetate and methyl propionate. The highest activities are obtained with acetic acid esters, but the alcohol group also plays an important role, as compounds with two carbon atoms in the alcohol moiety, i.e., vinyl and ethyl acetate, are by far the preferred substrates. The chain is Ethyl acetate hydrolase from Pseudomonas veronii.